A 247-amino-acid chain; its full sequence is Anionic trypsin (247 aa).

A signal peptide spans 1–15 (MHPLLILAFVGAAVA). A propeptide spans 16–23 (FPSDDDDK) (activation peptide). Positions 24–244 (IVGGYTCAEN…YVDWIQETIA (221 aa)) constitute a Peptidase S1 domain. 6 cysteine pairs are disulfide-bonded: Cys30–Cys160, Cys48–Cys64, Cys132–Cys233, Cys139–Cys206, Cys171–Cys185, and Cys196–Cys220. His63 serves as the catalytic Charge relay system. Glu75, Asn77, Val80, and Glu85 together coordinate Ca(2+). The active-site Charge relay system is Asp107. The Charge relay system role is filled by Ser200.

It belongs to the peptidase S1 family. Ca(2+) is required as a cofactor. In terms of processing, not sulfated on tyrosine residue(s).

The protein localises to the secreted. The protein resides in the extracellular space. It carries out the reaction Preferential cleavage: Arg-|-Xaa, Lys-|-Xaa.. The sequence is that of Anionic trypsin from Bos taurus (Bovine).